The primary structure comprises 391 residues: Elongation factor Tu 1 (391 aa).

The tr-type G domain maps to 10–201 (KPHVNIGTIG…AVDSYIPTPE (192 aa)). The G1 stretch occupies residues 19–26 (GHVDHGKT). 19–26 (GHVDHGKT) is a GTP binding site. T26 contacts Mg(2+). The tract at residues 55 to 59 (GITIS) is G2. Positions 76-79 (DCPG) are G3. Residues 76–80 (DCPGH) and 131–134 (NKVD) contribute to the GTP site. Residues 131 to 134 (NKVD) are G4. The interval 169-171 (SAL) is G5.

Belongs to the TRAFAC class translation factor GTPase superfamily. Classic translation factor GTPase family. EF-Tu/EF-1A subfamily. Monomer.

Its subcellular location is the cytoplasm. The catalysed reaction is GTP + H2O = GDP + phosphate + H(+). In terms of biological role, GTP hydrolase that promotes the GTP-dependent binding of aminoacyl-tRNA to the A-site of ribosomes during protein biosynthesis. This chain is Elongation factor Tu 1, found in Rhizobium etli (strain ATCC 51251 / DSM 11541 / JCM 21823 / NBRC 15573 / CFN 42).